Consider the following 746-residue polypeptide: Protein zyg-11 homolog (746 aa).

LRR repeat units follow at residues 185 to 209, 216 to 241, and 265 to 289; these read LPRL…GLRS, MHQL…VLQH, and LPQL…AFVE.

This sequence belongs to the zyg-11 family.

In terms of biological role, serves as substrate adapter subunit in an E3 ubiquitin ligase complex zyg11-cul2-elongin BC. Targets substrates bearing N-terminal glycine degrons for proteasomal degradation. The sequence is that of Protein zyg-11 homolog (zyg11) from Danio rerio (Zebrafish).